The primary structure comprises 649 residues: MNPNNRSEHDTIKATENNEVSNNHAQYPLADTPTLEELNYKEFLRRTTDNNVEALDSSTTKDAIQKGISIIGDLLGVVGFPYGGALVSFYTNLLNTIWPGEDPLKAFMQQVEALIDQKIADYAKDKATAELQGLKNVFKDYVSALDSWDKTPLTLRDGRSQGRIRELFSQAESHFRRSMPSFAVSGYEVLFLPTYAQAANTHLLLLKDAQIYGTDWGYSTDDLNEFHTKQKDLTIEYTNHCAKWYKAGLDKLRGSTYEEWVKFNRYRREMTLTVLDLITLFPLYDVRTYTKGVKTELTRDVLTDPIVAVNNMNGYGTTFSNIENYIRKPHLFDYLHAIQFHSRLQPGYFGTDSFNYWSGNYVSTRSSIGSDEIIRSPFYGNKSTLDVQNLEFNGEKVFRAVANGNLAVWPVGTGGTKIHSGVTKVQFSQYNDRKDEVRTQTYDSKRNVGGIVFDSIDQLPPITTDESLEKAYSHQLNYVRCFLLQGGRGIIPVFTWTHKSVDFYNTLDSEKITQIPFVKAFILVNSTSVVAGPGFTGGDIIKCTNGSGLTLYVTPAPDLTYSKTYKIRIRYASTSQVRFGIDLGSYTHSISYFDKTMDKGNTLTYNSFNLSSVSRPIEISGGNKIGVSVGGIGSGDEVYIDKIEFIPMD.

The span at Met1–Lys13 shows a compositional bias: basic and acidic residues. The segment at Met1 to Leu29 is disordered. The segment covering Ala14–Ala25 has biased composition (polar residues).

This sequence belongs to the delta endotoxin family.

Promotes colloidosmotic lysis by binding to the midgut epithelial cells of Coleoptera. The polypeptide is Pesticidal crystal protein Cry3Ca (cry3Ca) (Bacillus thuringiensis subsp. kurstaki).